The sequence spans 874 residues: Alanine--tRNA ligase (874 aa).

H564, H568, C665, and H669 together coordinate Zn(2+).

It belongs to the class-II aminoacyl-tRNA synthetase family. Zn(2+) serves as cofactor.

The protein resides in the cytoplasm. It carries out the reaction tRNA(Ala) + L-alanine + ATP = L-alanyl-tRNA(Ala) + AMP + diphosphate. Functionally, catalyzes the attachment of alanine to tRNA(Ala) in a two-step reaction: alanine is first activated by ATP to form Ala-AMP and then transferred to the acceptor end of tRNA(Ala). Also edits incorrectly charged Ser-tRNA(Ala) and Gly-tRNA(Ala) via its editing domain. This chain is Alanine--tRNA ligase, found in Burkholderia thailandensis (strain ATCC 700388 / DSM 13276 / CCUG 48851 / CIP 106301 / E264).